Consider the following 90-residue polypeptide: uncharacterized protein (90 aa).

A signal peptide spans 1–26 (MFESEAELRRIRIALVWIAVFLLFGA).

This is an uncharacterized protein from Bacillus subtilis (strain 168).